Here is a 149-residue protein sequence, read N- to C-terminus: Large ribosomal subunit protein bL9 (149 aa).

It belongs to the bacterial ribosomal protein bL9 family.

Binds to the 23S rRNA. The polypeptide is Large ribosomal subunit protein bL9 (Legionella pneumophila (strain Lens)).